The sequence spans 412 residues: Histidine--tRNA ligase (412 aa).

It belongs to the class-II aminoacyl-tRNA synthetase family. Homodimer.

It localises to the cytoplasm. The catalysed reaction is tRNA(His) + L-histidine + ATP = L-histidyl-tRNA(His) + AMP + diphosphate + H(+). This Rickettsia typhi (strain ATCC VR-144 / Wilmington) protein is Histidine--tRNA ligase.